A 940-amino-acid polypeptide reads, in one-letter code: Isoleucine--tRNA ligase (940 aa).

The 'HIGH' region motif lies at 58-68 (PYANGNIHIGH). Glutamate 563 lines the L-isoleucyl-5'-AMP pocket. A 'KMSKS' region motif is present at residues 604 to 608 (KMSKS). ATP is bound at residue lysine 607. Zn(2+) contacts are provided by cysteine 903, cysteine 906, cysteine 923, and cysteine 926.

It belongs to the class-I aminoacyl-tRNA synthetase family. IleS type 1 subfamily. As to quaternary structure, monomer. The cofactor is Zn(2+).

Its subcellular location is the cytoplasm. It catalyses the reaction tRNA(Ile) + L-isoleucine + ATP = L-isoleucyl-tRNA(Ile) + AMP + diphosphate. Catalyzes the attachment of isoleucine to tRNA(Ile). As IleRS can inadvertently accommodate and process structurally similar amino acids such as valine, to avoid such errors it has two additional distinct tRNA(Ile)-dependent editing activities. One activity is designated as 'pretransfer' editing and involves the hydrolysis of activated Val-AMP. The other activity is designated 'posttransfer' editing and involves deacylation of mischarged Val-tRNA(Ile). In Buchnera aphidicola subsp. Acyrthosiphon pisum (strain 5A), this protein is Isoleucine--tRNA ligase.